The chain runs to 417 residues: NADH-quinone oxidoreductase subunit D (417 aa).

The protein belongs to the complex I 49 kDa subunit family. In terms of assembly, NDH-1 is composed of 14 different subunits. Subunits NuoB, C, D, E, F, and G constitute the peripheral sector of the complex.

Its subcellular location is the cell inner membrane. It catalyses the reaction a quinone + NADH + 5 H(+)(in) = a quinol + NAD(+) + 4 H(+)(out). Functionally, NDH-1 shuttles electrons from NADH, via FMN and iron-sulfur (Fe-S) centers, to quinones in the respiratory chain. The immediate electron acceptor for the enzyme in this species is believed to be ubiquinone. Couples the redox reaction to proton translocation (for every two electrons transferred, four hydrogen ions are translocated across the cytoplasmic membrane), and thus conserves the redox energy in a proton gradient. This chain is NADH-quinone oxidoreductase subunit D, found in Burkholderia multivorans (strain ATCC 17616 / 249).